Consider the following 61-residue polypeptide: Small ribosomal subunit protein uS14C (61 aa).

Positions 24, 27, 40, and 43 each coordinate Zn(2+).

It belongs to the universal ribosomal protein uS14 family. Zinc-binding uS14 subfamily. As to quaternary structure, part of the 30S ribosomal subunit. Contacts proteins S3 and S10. Zn(2+) is required as a cofactor.

Functionally, binds 16S rRNA, required for the assembly of 30S particles and may also be responsible for determining the conformation of the 16S rRNA at the A site. The chain is Small ribosomal subunit protein uS14C from Bacillus licheniformis (strain ATCC 14580 / DSM 13 / JCM 2505 / CCUG 7422 / NBRC 12200 / NCIMB 9375 / NCTC 10341 / NRRL NRS-1264 / Gibson 46).